A 273-amino-acid chain; its full sequence is Neuferricin (273 aa).

The signal sequence occupies residues 1–22 (MLGYLAAAALCLAAVLLMRLDH). One can recognise a Cytochrome b5 heme-binding domain in the interval 44-143 (GRLMSKEELS…QNYITIGKLT (100 aa)).

It belongs to the cytochrome b5 family. MAPR subfamily.

The protein resides in the secreted. Its function is as follows. Heme-binding protein which promotes neuronal but not astrocyte differentiation. The polypeptide is Neuferricin (cyb5d2) (Xenopus tropicalis (Western clawed frog)).